A 316-amino-acid chain; its full sequence is Nucleotide-binding protein Sala_2050 (316 aa).

Position 18 to 25 (18 to 25 (GLSGAGKS)) interacts with ATP. Position 69–72 (69–72 (DSRS)) interacts with GTP. Residues 283 to 316 (GYEPTLTHRNLDSAPQDGLEGKPPSAARASGGAR) are disordered.

It belongs to the RapZ-like family.

In terms of biological role, displays ATPase and GTPase activities. The polypeptide is Nucleotide-binding protein Sala_2050 (Sphingopyxis alaskensis (strain DSM 13593 / LMG 18877 / RB2256) (Sphingomonas alaskensis)).